The following is a 504-amino-acid chain: ATP synthase subunit alpha, chloroplastic (504 aa).

170-177 lines the ATP pocket; the sequence is GDRQTGKT.

It belongs to the ATPase alpha/beta chains family. As to quaternary structure, F-type ATPases have 2 components, CF(1) - the catalytic core - and CF(0) - the membrane proton channel. CF(1) has five subunits: alpha(3), beta(3), gamma(1), delta(1), epsilon(1). CF(0) has four main subunits: a, b, b' and c.

The protein localises to the plastid. Its subcellular location is the chloroplast thylakoid membrane. It carries out the reaction ATP + H2O + 4 H(+)(in) = ADP + phosphate + 5 H(+)(out). Functionally, produces ATP from ADP in the presence of a proton gradient across the membrane. The alpha chain is a regulatory subunit. In Porphyra purpurea (Red seaweed), this protein is ATP synthase subunit alpha, chloroplastic.